Here is a 264-residue protein sequence, read N- to C-terminus: MQKLYIIKVGGNIIDNPEALTSFLKDFASLKENKILVHGGGKVATEISKGLGIEAQMVDGRRITDAETLKIVTMVYGGLINKNIVAKLQSNECNAIGLTGADANIMLSSKRPLKNGIDYGFVGDVKKVHPQPLIHLLSQGITPVVAPLTHDGNGTMLNTNADTVASELAVALCGAFAVNLVYCFELKGVLRDFEDKDSVISTINPDTYEELKSTGVINKGMIPKLDNSFNAINAGVSSVIICQAESLVELINENKTVGTKLVAN.

Substrate is bound by residues 40–41, arginine 62, and asparagine 158; that span reads GG.

Belongs to the acetylglutamate kinase family. ArgB subfamily.

The protein resides in the cytoplasm. It catalyses the reaction N-acetyl-L-glutamate + ATP = N-acetyl-L-glutamyl 5-phosphate + ADP. Its pathway is amino-acid biosynthesis; L-arginine biosynthesis; N(2)-acetyl-L-ornithine from L-glutamate: step 2/4. Its function is as follows. Catalyzes the ATP-dependent phosphorylation of N-acetyl-L-glutamate. This chain is Acetylglutamate kinase, found in Cytophaga hutchinsonii (strain ATCC 33406 / DSM 1761 / CIP 103989 / NBRC 15051 / NCIMB 9469 / D465).